The following is a 47-amino-acid chain: Mu-theraphotoxin-An1a (47 aa).

Cystine bridges form between Cys-4/Cys-34, Cys-8/Cys-39, and Cys-22/Cys-44.

Contains 3 disulfide bonds. Expressed by the venom gland.

It is found in the secreted. Its function is as follows. Is toxic to insects. Reduces amplitude and frequency of spontaneous firing and inhibits voltage-gated sodium current (Nav) in the dorsal unpaired median (DUM) neurons of P.americana. In Acanthoscurria natalensis (Tarantula spider), this protein is Mu-theraphotoxin-An1a.